The sequence spans 78 residues: MAFQKRGGRRRRKVDYIAANHIEYIDYKDTELLKRFISERGKILPRRVSGTSAKNQRRLTIAIKRARIMGLLPFVAED.

It belongs to the bacterial ribosomal protein bS18 family. In terms of assembly, part of the 30S ribosomal subunit. Forms a tight heterodimer with protein bS6.

In terms of biological role, binds as a heterodimer with protein bS6 to the central domain of the 16S rRNA, where it helps stabilize the platform of the 30S subunit. The protein is Small ribosomal subunit protein bS18 of Pediococcus pentosaceus (strain ATCC 25745 / CCUG 21536 / LMG 10740 / 183-1w).